Consider the following 161-residue polypeptide: Phosphopantetheine adenylyltransferase (161 aa).

T10 lines the substrate pocket. ATP-binding positions include 10–11 (TF) and H18. 3 residues coordinate substrate: K42, M74, and R88. ATP-binding positions include 89–91 (GLR), E99, and 124–130 (WSFISSS).

The protein belongs to the bacterial CoaD family. Homohexamer. Mg(2+) serves as cofactor.

The protein localises to the cytoplasm. It carries out the reaction (R)-4'-phosphopantetheine + ATP + H(+) = 3'-dephospho-CoA + diphosphate. Its pathway is cofactor biosynthesis; coenzyme A biosynthesis; CoA from (R)-pantothenate: step 4/5. Reversibly transfers an adenylyl group from ATP to 4'-phosphopantetheine, yielding dephospho-CoA (dPCoA) and pyrophosphate. This is Phosphopantetheine adenylyltransferase from Serratia proteamaculans (strain 568).